A 344-amino-acid polypeptide reads, in one-letter code: Axoneme-associated protein mst101(1) (344 aa).

12 tandem repeats follow at residues 74–89, 90–105, 106–121, 122–137, 138–153, 154–169, 170–185, 186–201, 202–217, 218–233, 234–249, and 250–265. The segment at 74–344 is 17 X 16 AA approximate tandem repeats of K-K-K-C-X-E-X-A-[KQ]-K-X-X-E-X-A-X; it reads KKKCAEAAKK…AAQKKCEPKK (271 aa). Residues 206–244 form a disordered region; it reads KEAAEKKKCEERAKKEKEAAEKKKCEERAKKEKEAAEKK. The 13; approximate repeat unit spans residues 266–281; it reads AQKKKCAELAKKAKEA. A 14; approximate repeat occupies 282 to 297; it reads AEKKKCAKKAGEKGSK. A compositionally biased stretch (basic and acidic residues) spans 285–315; that stretch reads KKCAKKAGEKGSKQSGSDKGKKNGKKNDMKN. The interval 285–318 is disordered; it reads KKCAKKAGEKGSKQSGSDKGKKNGKKNDMKNKCA. The 15; approximate repeat unit spans residues 298–313; it reads QSGSDKGKKNGKKNDM. Repeat 16 spans residues 314-329; it reads KNKCAMLAKKAKEEAL. One copy of the 17; truncated repeat lies at 330-344; that stretch reads KKKCAAAQKKCEPKK.

Testis. Located in spermatocytes and spermatid bundles.

The protein localises to the cytoplasm. Functionally, possible structural role in the sperm tail. It is associated with axonemal structures. This is Axoneme-associated protein mst101(1) (mst101(1)) from Drosophila hydei (Fruit fly).